We begin with the raw amino-acid sequence, 240 residues long: MGRRIQGQRRGRGTSTFRAPSHRYKADLEHRKVEDGDVIAGTVVDIEHDPARSAPVAAVEFEDGDRRLILAPEGVGVGDELQVGVSAEIAPGNTLPLAEIPEGVPVCNVESSPGDGGKFARASGVNAQLLTHDRNVAVVKLPSGEMKRLDPQCRATIGVVAGGGRTDKPFVKAGNKHHKMKARGTKWPNVRGVAMNAVDHPFGGGGRQHPGKPKSISRNAPPGRKVGDIASKRTGRGGNE.

Residues 200–240 (HPFGGGGRQHPGKPKSISRNAPPGRKVGDIASKRTGRGGNE) form a disordered region.

The protein belongs to the universal ribosomal protein uL2 family. In terms of assembly, part of the 50S ribosomal subunit. Forms a bridge to the 30S subunit in the 70S ribosome. Interacts weakly with protein L37Ae.

One of the primary rRNA binding proteins. Required for association of the 30S and 50S subunits to form the 70S ribosome, for tRNA binding and peptide bond formation. It has been suggested to have peptidyltransferase activity; this is somewhat controversial. Makes several contacts with the 16S rRNA in the 70S ribosome. This chain is Large ribosomal subunit protein uL2 (rpl2), found in Haloarcula marismortui (strain ATCC 43049 / DSM 3752 / JCM 8966 / VKM B-1809) (Halobacterium marismortui).